The following is a 155-amino-acid chain: Deoxyuridine 5'-triphosphate nucleotidohydrolase (155 aa).

Substrate contacts are provided by residues 74 to 76, Asn-87, and 91 to 93; these read RSG and TID.

Belongs to the dUTPase family. Mg(2+) is required as a cofactor.

It catalyses the reaction dUTP + H2O = dUMP + diphosphate + H(+). It functions in the pathway pyrimidine metabolism; dUMP biosynthesis; dUMP from dCTP (dUTP route): step 2/2. This enzyme is involved in nucleotide metabolism: it produces dUMP, the immediate precursor of thymidine nucleotides and it decreases the intracellular concentration of dUTP so that uracil cannot be incorporated into DNA. This Cereibacter sphaeroides (strain ATCC 17023 / DSM 158 / JCM 6121 / CCUG 31486 / LMG 2827 / NBRC 12203 / NCIMB 8253 / ATH 2.4.1.) (Rhodobacter sphaeroides) protein is Deoxyuridine 5'-triphosphate nucleotidohydrolase.